The sequence spans 242 residues: Sec-independent protein translocase protein TatCd (242 aa).

3 helical membrane passes run I19–D39, I60–A80, and L107–L127. Positions S128–R149 are interaction with TatAd. A helical membrane pass occupies residues F150–F170. An interaction with TatAd region spans residues L171–K187. The next 2 membrane-spanning stretches (helical) occupy residues L188–D208 and F209–V229.

Belongs to the TatC family. Forms a complex with TatAd. Two types of complexes exist: one composed of TatAd and TatCd, and another composed only of TatAd.

It is found in the cell membrane. Its function is as follows. Part of the twin-arginine translocation (Tat) system that transports large folded proteins containing a characteristic twin-arginine motif in their signal peptide across membranes. Required for PhoD secretion. TatCd promotes membrane localization of TatAd via domain specific interactions. TatCd is required for stabile production of TatAd as well as for its maintenance. The sequence is that of Sec-independent protein translocase protein TatCd from Bacillus subtilis (strain 168).